The sequence spans 166 residues: UPF0336 protein ML1908 (166 aa).

This sequence belongs to the UPF0336 family.

The sequence is that of UPF0336 protein ML1908 from Mycobacterium leprae (strain TN).